The primary structure comprises 335 residues: Pyridoxal 5'-phosphate synthase subunit PdxS (335 aa).

Asp59 provides a ligand contact to D-ribose 5-phosphate. Lys116 serves as the catalytic Schiff-base intermediate with D-ribose 5-phosphate. Gly188 is a binding site for D-ribose 5-phosphate. Lys200 lines the D-glyceraldehyde 3-phosphate pocket. D-ribose 5-phosphate contacts are provided by residues Gly253 and 274 to 275 (GS).

It belongs to the PdxS/SNZ family. In the presence of PdxT, forms a dodecamer of heterodimers.

It carries out the reaction aldehydo-D-ribose 5-phosphate + D-glyceraldehyde 3-phosphate + L-glutamine = pyridoxal 5'-phosphate + L-glutamate + phosphate + 3 H2O + H(+). The protein operates within cofactor biosynthesis; pyridoxal 5'-phosphate biosynthesis. Functionally, catalyzes the formation of pyridoxal 5'-phosphate from ribose 5-phosphate (RBP), glyceraldehyde 3-phosphate (G3P) and ammonia. The ammonia is provided by the PdxT subunit. Can also use ribulose 5-phosphate and dihydroxyacetone phosphate as substrates, resulting from enzyme-catalyzed isomerization of RBP and G3P, respectively. This chain is Pyridoxal 5'-phosphate synthase subunit PdxS, found in Hyperthermus butylicus (strain DSM 5456 / JCM 9403 / PLM1-5).